A 386-amino-acid polypeptide reads, in one-letter code: Protein-glutamate methylesterase/protein-glutamine glutaminase 3 (386 aa).

The Response regulatory domain maps to 4 to 121; sequence KVLVVDDSGF…SRNPQKVKQL (118 aa). D55 bears the 4-aspartylphosphate mark. The segment covering 132–194 has biased composition (low complexity); that stretch reads SNRRSSGFGS…SHAPAHPTTS (63 aa). The segment at 132–197 is disordered; it reads SNRRSSGFGS…PAHPTTSGTA (66 aa). Positions 191 to 383 constitute a CheB-type methylesterase domain; sequence PTTSGTAKRK…LDDIGRHLVE (193 aa). Active-site residues include S210, H237, and D330.

Belongs to the CheB family. Post-translationally, phosphorylated by CheA. Phosphorylation of the N-terminal regulatory domain activates the methylesterase activity.

It localises to the cytoplasm. It catalyses the reaction [protein]-L-glutamate 5-O-methyl ester + H2O = L-glutamyl-[protein] + methanol + H(+). The enzyme catalyses L-glutaminyl-[protein] + H2O = L-glutamyl-[protein] + NH4(+). Functionally, involved in chemotaxis. Part of a chemotaxis signal transduction system that modulates chemotaxis in response to various stimuli. Catalyzes the demethylation of specific methylglutamate residues introduced into the chemoreceptors (methyl-accepting chemotaxis proteins or MCP) by CheR. Also mediates the irreversible deamidation of specific glutamine residues to glutamic acid. The sequence is that of Protein-glutamate methylesterase/protein-glutamine glutaminase 3 from Pseudomonas syringae pv. syringae (strain B728a).